We begin with the raw amino-acid sequence, 269 residues long: Regulating synaptic membrane exocytosis protein 4 (269 aa).

Positions 115 to 233 (PMGGVEIGLQ…DLTTLAVGWY (119 aa)) constitute a C2 domain. 2 positions are modified to phosphoserine: Ser-254 and Ser-257.

As to quaternary structure, binds PPFIA3. Brain specific.

The protein localises to the synapse. Functionally, regulates synaptic membrane exocytosis. This chain is Regulating synaptic membrane exocytosis protein 4 (Rims4), found in Rattus norvegicus (Rat).